A 364-amino-acid chain; its full sequence is D-alanine--D-alanine ligase A (364 aa).

The region spanning 145 to 348 (KRLLRDAGLN…YTDLITRLIE (204 aa)) is the ATP-grasp domain. 175–230 (ESKLGLPLFVKPANQGSSVGVSKVTSEEQYTIAVDLAFEFDHKVIVEQGIKGREIE) is an ATP binding site. The Mg(2+) site is built by aspartate 302, glutamate 315, and asparagine 317.

The protein belongs to the D-alanine--D-alanine ligase family. The cofactor is Mg(2+). Mn(2+) serves as cofactor.

The protein resides in the cytoplasm. It catalyses the reaction 2 D-alanine + ATP = D-alanyl-D-alanine + ADP + phosphate + H(+). The protein operates within cell wall biogenesis; peptidoglycan biosynthesis. Functionally, cell wall formation. This Escherichia coli O6:H1 (strain CFT073 / ATCC 700928 / UPEC) protein is D-alanine--D-alanine ligase A.